Consider the following 122-residue polypeptide: Large ribosomal subunit protein uL14c (122 aa).

The protein belongs to the universal ribosomal protein uL14 family. Part of the 50S ribosomal subunit.

Its subcellular location is the plastid. It is found in the chloroplast. Its function is as follows. Binds to 23S rRNA. This Ipomoea purpurea (Common morning glory) protein is Large ribosomal subunit protein uL14c.